The following is a 299-amino-acid chain: MRIIFMGSPGFAVNSLSLLLKSKSEVVAVYTKAPKPSGRGQKPMKSPVHVIAEESNIEVCTPISLKFSAEQEKFRNFKPDVAVVAAYGLILPREILNIPKYGCINIHPSLLPRWRGAAPIQHTILAGDQETGVSIMQLDEGLDSGPILKQEKFLIEKNDNYKTLHDKLSKLGSDLLLKVLNEIEKQLPLKQNDNDACYADKVEDYKIYASDACEVAYRKVKAFYPKAFIKIENKRIRILDADFEALASEQGKIVNDNMHISLKGGTLIPKVVQMEGRNPCSIEDFIRGLKSSMVKKFIE.

109–112 (SLLP) is a (6S)-5,6,7,8-tetrahydrofolate binding site.

It belongs to the Fmt family.

The enzyme catalyses L-methionyl-tRNA(fMet) + (6R)-10-formyltetrahydrofolate = N-formyl-L-methionyl-tRNA(fMet) + (6S)-5,6,7,8-tetrahydrofolate + H(+). Attaches a formyl group to the free amino group of methionyl-tRNA(fMet). The formyl group appears to play a dual role in the initiator identity of N-formylmethionyl-tRNA by promoting its recognition by IF2 and preventing the misappropriation of this tRNA by the elongation apparatus. In Wolbachia sp. subsp. Drosophila simulans (strain wRi), this protein is Methionyl-tRNA formyltransferase.